We begin with the raw amino-acid sequence, 242 residues long: Uridylate kinase (242 aa).

16–19 (KVSG) is a binding site for ATP. G58 contacts UMP. Residues G59 and R63 each coordinate ATP. UMP contacts are provided by residues D78 and 139-146 (TGNPFCTT). ATP is bound by residues T166, Q167, Y172, and D175.

Belongs to the UMP kinase family. In terms of assembly, homohexamer.

It localises to the cytoplasm. It catalyses the reaction UMP + ATP = UDP + ADP. The protein operates within pyrimidine metabolism; CTP biosynthesis via de novo pathway; UDP from UMP (UMPK route): step 1/1. Its activity is regulated as follows. Inhibited by UTP. Functionally, catalyzes the reversible phosphorylation of UMP to UDP. This is Uridylate kinase from Rickettsia prowazekii (strain Madrid E).